Consider the following 429-residue polypeptide: Adenylosuccinate synthetase (429 aa).

GTP is bound by residues 12 to 18 (GDEGKGK) and 40 to 42 (GHT). Aspartate 13 acts as the Proton acceptor in catalysis. Mg(2+) is bound by residues aspartate 13 and glycine 40. IMP is bound by residues 13–16 (DEGK), 38–41 (NAGH), threonine 128, arginine 142, glutamine 223, threonine 238, and arginine 302. The active-site Proton donor is the histidine 41. 298-304 (TTTGRPR) contacts substrate. GTP-binding positions include arginine 304, 330-332 (CID), and 412-414 (SVG).

Belongs to the adenylosuccinate synthetase family. Homodimer. Requires Mg(2+) as cofactor.

It is found in the cytoplasm. It catalyses the reaction IMP + L-aspartate + GTP = N(6)-(1,2-dicarboxyethyl)-AMP + GDP + phosphate + 2 H(+). It functions in the pathway purine metabolism; AMP biosynthesis via de novo pathway; AMP from IMP: step 1/2. Plays an important role in the de novo pathway of purine nucleotide biosynthesis. Catalyzes the first committed step in the biosynthesis of AMP from IMP. The polypeptide is Adenylosuccinate synthetase (Streptococcus mutans serotype c (strain ATCC 700610 / UA159)).